The primary structure comprises 228 residues: Triosephosphate isomerase (228 aa).

12-14 contacts substrate; that stretch reads NFK. Histidine 96 serves as the catalytic Electrophile. Glutamate 144 acts as the Proton acceptor in catalysis. Substrate-binding positions include isoleucine 149, glycine 184, and 205 to 206; that span reads AS.

Belongs to the triosephosphate isomerase family. In terms of assembly, homotetramer; dimer of dimers.

It localises to the cytoplasm. The enzyme catalyses D-glyceraldehyde 3-phosphate = dihydroxyacetone phosphate. Its pathway is carbohydrate biosynthesis; gluconeogenesis. It participates in carbohydrate degradation; glycolysis; D-glyceraldehyde 3-phosphate from glycerone phosphate: step 1/1. Involved in the gluconeogenesis. Catalyzes stereospecifically the conversion of dihydroxyacetone phosphate (DHAP) to D-glyceraldehyde-3-phosphate (G3P). The polypeptide is Triosephosphate isomerase (Pyrococcus furiosus (strain ATCC 43587 / DSM 3638 / JCM 8422 / Vc1)).